The primary structure comprises 291 residues: Small ribosomal subunit protein uS2 (291 aa).

Belongs to the universal ribosomal protein uS2 family.

In Orientia tsutsugamushi (strain Boryong) (Rickettsia tsutsugamushi), this protein is Small ribosomal subunit protein uS2.